Reading from the N-terminus, the 181-residue chain is uncharacterized protein (181 aa).

This sequence to M.jannaschii MJ1106.

This is an uncharacterized protein from Methanothermobacter thermautotrophicus (strain ATCC 29096 / DSM 1053 / JCM 10044 / NBRC 100330 / Delta H) (Methanobacterium thermoautotrophicum).